A 414-amino-acid chain; its full sequence is GA-binding protein subunit beta-2 (414 aa).

ANK repeat units follow at residues 5 to 34 (DLGK…PFTT), 37 to 66 (LGTS…SRDA), 70 to 99 (VDRT…DVNA), 103 to 132 (LQMT…DVYA), and 136 to 166 (FDKS…QVNT). Ser218 bears the Phosphoserine mark. Residues 310–362 (EEMKEGSERELLQQQLQEANRRAQEYRHQLLKKEQEAEQYRLRLEAMAQQQTN) are a coiled coil.

In terms of assembly, heterotetramer of two alpha and two beta subunits. The C-terminal is necessary for the formation of a heterotetrameric GABP-alpha-2/beta-2 complex, and also facilitates homotypic dimerization. Interacts with ADGRB2. As to expression, high levels in thymus, spleen, kidney and intestine.

It is found in the nucleus. Transcription factor capable of interacting with purine rich repeats (GA repeats). Must associate with GABP-alpha to bind DNA. The polypeptide is GA-binding protein subunit beta-2 (Gabpb2) (Mus musculus (Mouse)).